Reading from the N-terminus, the 471-residue chain is NADH-quinone oxidoreductase subunit N 1 (471 aa).

14 helical membrane-spanning segments follow: residues 11–31, 39–59, 81–101, 105–125, 127–147, 162–182, 200–220, 234–254, 270–290, 296–316, 324–344, 365–385, 398–418, and 444–464; these read ALVP…AGAW, TIHV…ALAA, AIVL…VAGH, TEFV…AGAG, LIML…LAGW, LAGA…FGVA, AAAA…AGAV, PPPV…VAFY, LITA…AFAQ, MLGY…AVAG, ALLL…AVVA, ALAL…AVFV, GLAW…FYYL, and AVAL…GIVL.

It belongs to the complex I subunit 2 family. In terms of assembly, NDH-1 is composed of 14 different subunits. Subunits NuoA, H, J, K, L, M, N constitute the membrane sector of the complex.

Its subcellular location is the cell membrane. It carries out the reaction a quinone + NADH + 5 H(+)(in) = a quinol + NAD(+) + 4 H(+)(out). In terms of biological role, NDH-1 shuttles electrons from NADH, via FMN and iron-sulfur (Fe-S) centers, to quinones in the respiratory chain. The immediate electron acceptor for the enzyme in this species is believed to be a menaquinone. Couples the redox reaction to proton translocation (for every two electrons transferred, four hydrogen ions are translocated across the cytoplasmic membrane), and thus conserves the redox energy in a proton gradient. In Streptomyces griseus subsp. griseus (strain JCM 4626 / CBS 651.72 / NBRC 13350 / KCC S-0626 / ISP 5235), this protein is NADH-quinone oxidoreductase subunit N 1.